Reading from the N-terminus, the 274-residue chain is 2,3,4,5-tetrahydropyridine-2,6-dicarboxylate N-succinyltransferase (274 aa).

Substrate is bound by residues R104 and D141.

The protein belongs to the transferase hexapeptide repeat family. As to quaternary structure, homotrimer.

Its subcellular location is the cytoplasm. The enzyme catalyses (S)-2,3,4,5-tetrahydrodipicolinate + succinyl-CoA + H2O = (S)-2-succinylamino-6-oxoheptanedioate + CoA. It functions in the pathway amino-acid biosynthesis; L-lysine biosynthesis via DAP pathway; LL-2,6-diaminopimelate from (S)-tetrahydrodipicolinate (succinylase route): step 1/3. The chain is 2,3,4,5-tetrahydropyridine-2,6-dicarboxylate N-succinyltransferase from Shewanella oneidensis (strain ATCC 700550 / JCM 31522 / CIP 106686 / LMG 19005 / NCIMB 14063 / MR-1).